We begin with the raw amino-acid sequence, 169 residues long: Methanogen homoaconitase small subunit (169 aa).

Residues 27 to 30 (YLRT) carry the YLRT motif.

This sequence belongs to the LeuD family. LeuD type 2 subfamily. Heterotetramer of 2 HacA and 2 HacB proteins.

It carries out the reaction (2R)-homocitrate = (2R,3S)-homoisocitrate. The enzyme catalyses (2R)-homocitrate = cis-homoaconitate + H2O. It catalyses the reaction (2R,3S)-homoisocitrate = cis-homoaconitate + H2O. The catalysed reaction is cis-(homo)2aconitate + H2O = (2R,3S)-iso(homo)2citrate. It carries out the reaction cis-(homo)3aconitate + H2O = (2R,3S)-iso(homo)3citrate. Its pathway is organic acid metabolism; 2-oxosuberate biosynthesis. In terms of biological role, component of a hydro-lyase with broad substrate specificity for cis-unsaturated tricarboxylic acids. Catalyzes both the reversible dehydration of (R)-homocitrate ((R)-2-hydroxybutane-1,2,4-tricarboxylate) to produce cis-homoaconitate ((Z)-but-1-ene-1,2,4-tricarboxylate), and its hydration to homoisocitrate ((1R,2S)-1-hydroxybutane-1,2,4-tricarboxylate). Is also able to hydrate the analogous longer chain substrates cis-homo(2)-aconitate, cis-homo(3)-aconitate. These reactions are part of the biosynthesis pathway of coenzyme B. The protein is Methanogen homoaconitase small subunit (hacB) of Methanosarcina mazei (strain ATCC BAA-159 / DSM 3647 / Goe1 / Go1 / JCM 11833 / OCM 88) (Methanosarcina frisia).